The following is a 201-amino-acid chain: Holliday junction branch migration complex subunit RuvA (201 aa).

The segment at 1 to 64 (MYEYIRGQFQ…EDFIGLYGFT (64 aa)) is domain I. The segment at 65–143 (TREELEMFKL…PDELTSEEGQ (79 aa)) is domain II. The interval 144–152 (LIEGINDNS) is flexible linker. A domain III region spans residues 153–201 (DYSFNINETLSALMALGYTEKEAQKALEKVDKTLSIENMIKESLKLLMR).

Belongs to the RuvA family. As to quaternary structure, homotetramer. Forms an RuvA(8)-RuvB(12)-Holliday junction (HJ) complex. HJ DNA is sandwiched between 2 RuvA tetramers; dsDNA enters through RuvA and exits via RuvB. An RuvB hexamer assembles on each DNA strand where it exits the tetramer. Each RuvB hexamer is contacted by two RuvA subunits (via domain III) on 2 adjacent RuvB subunits; this complex drives branch migration. In the full resolvosome a probable DNA-RuvA(4)-RuvB(12)-RuvC(2) complex forms which resolves the HJ.

It localises to the cytoplasm. Functionally, the RuvA-RuvB-RuvC complex processes Holliday junction (HJ) DNA during genetic recombination and DNA repair, while the RuvA-RuvB complex plays an important role in the rescue of blocked DNA replication forks via replication fork reversal (RFR). RuvA specifically binds to HJ cruciform DNA, conferring on it an open structure. The RuvB hexamer acts as an ATP-dependent pump, pulling dsDNA into and through the RuvAB complex. HJ branch migration allows RuvC to scan DNA until it finds its consensus sequence, where it cleaves and resolves the cruciform DNA. In Clostridium perfringens (strain 13 / Type A), this protein is Holliday junction branch migration complex subunit RuvA.